Here is a 70-residue protein sequence, read N- to C-terminus: Large ribosomal subunit protein bL28 (70 aa).

This sequence belongs to the bacterial ribosomal protein bL28 family.

In Thermosipho melanesiensis (strain DSM 12029 / CIP 104789 / BI429), this protein is Large ribosomal subunit protein bL28.